A 557-amino-acid chain; its full sequence is Probable protein kinase UbiB (557 aa).

One can recognise a Protein kinase domain in the interval 121–509 (SFDTVPLASA…RKLQTRVVTA (389 aa)). ATP-binding positions include 127 to 135 (LASASIAQV) and lysine 154. Aspartate 289 serves as the catalytic Proton acceptor. The next 2 helical transmembrane spans lie at 506–526 (VVTA…YGLH) and 535–555 (VPVW…VAWL).

The protein belongs to the ABC1 family. UbiB subfamily.

It localises to the cell inner membrane. It functions in the pathway cofactor biosynthesis; ubiquinone biosynthesis [regulation]. Functionally, is probably a protein kinase regulator of UbiI activity which is involved in aerobic coenzyme Q (ubiquinone) biosynthesis. The protein is Probable protein kinase UbiB of Xanthomonas euvesicatoria pv. vesicatoria (strain 85-10) (Xanthomonas campestris pv. vesicatoria).